Reading from the N-terminus, the 320-residue chain is Cytochrome f (320 aa).

The first 35 residues, 1–35 (MQTRNAFSWIKKEITRSISVLLMIYIITRAPISNA), serve as a signal peptide directing secretion. The heme site is built by Y36, C56, C59, and H60. The chain crosses the membrane as a helical span at residues 286–305 (VQGLLLFLASIILAQILLVL).

Belongs to the cytochrome f family. In terms of assembly, the 4 large subunits of the cytochrome b6-f complex are cytochrome b6, subunit IV (17 kDa polypeptide, petD), cytochrome f and the Rieske protein, while the 4 small subunits are PetG, PetL, PetM and PetN. The complex functions as a dimer. Requires heme as cofactor.

It is found in the plastid. The protein localises to the chloroplast thylakoid membrane. Component of the cytochrome b6-f complex, which mediates electron transfer between photosystem II (PSII) and photosystem I (PSI), cyclic electron flow around PSI, and state transitions. This is Cytochrome f (petA) from Pisum sativum (Garden pea).